The chain runs to 598 residues: Trichothecene efflux pump TRI12 (598 aa).

Residues 42–62 (IVASFAAFSMNVVATYFVLQA) traverse the membrane as a helical segment. The N-linked (GlcNAc...) asparagine glycan is linked to N79. 2 consecutive transmembrane segments (helical) span residues 109–129 (PFVILTHILGLVGAIVGCTAT) and 135–155 (LAAMTMLGVAAGPAGASPLFI). N161 carries N-linked (GlcNAc...) asparagine glycosylation. Helical transmembrane passes span 165–185 (FLGLLIVSAPVVATNGLSPYL), 197–217 (WIFYIYIIMSTIAVTLIIIWY), 241–261 (WIGIILVIAGTSLFLLGVSWG), 273–293 (VIGLISSGAGTLVIFALYEVY), 312–332 (FVCILIISSIMGSMHLSLVIM), 356–376 (ATASFGTGAGVVVLGSLFHLV), 381–401 (WQILVGAMWLTAFLGAMSSIN), 409–429 (IALSVMTGFVVAWAQDITMLL), 442–462 (AFAVVAAARPFAGSIFTAAFI), and 533–553 (ANVYYFAMALGVIPIIASLCM). The disordered stretch occupies residues 579–598 (LEGNSESQPSPIILSMADKE).

The protein belongs to the major facilitator superfamily.

The protein localises to the cell membrane. Functionally, efflux pump that provides the dual role of trichothecene export and self-protection by allowing the fungus to evade the harmful effect of its own trichothecene production. This is Trichothecene efflux pump TRI12 from Fusarium sporotrichioides.